A 140-amino-acid chain; its full sequence is Nucleoside diphosphate kinase (140 aa).

ATP-binding residues include K11, F59, R87, T93, R104, and N114. The active-site Pros-phosphohistidine intermediate is H117.

It belongs to the NDK family. In terms of assembly, homotetramer. Mg(2+) is required as a cofactor.

The protein resides in the cytoplasm. It carries out the reaction a 2'-deoxyribonucleoside 5'-diphosphate + ATP = a 2'-deoxyribonucleoside 5'-triphosphate + ADP. The enzyme catalyses a ribonucleoside 5'-diphosphate + ATP = a ribonucleoside 5'-triphosphate + ADP. Its function is as follows. Major role in the synthesis of nucleoside triphosphates other than ATP. The ATP gamma phosphate is transferred to the NDP beta phosphate via a ping-pong mechanism, using a phosphorylated active-site intermediate. This is Nucleoside diphosphate kinase from Rickettsia peacockii (strain Rustic).